The following is a 406-amino-acid chain: Arginine deiminase (406 aa).

The active-site Amidino-cysteine intermediate is the C396.

It belongs to the arginine deiminase family.

It localises to the cytoplasm. The catalysed reaction is L-arginine + H2O = L-citrulline + NH4(+). It participates in amino-acid degradation; L-arginine degradation via ADI pathway; carbamoyl phosphate from L-arginine: step 1/2. The protein is Arginine deiminase of Salmonella typhimurium (strain LT2 / SGSC1412 / ATCC 700720).